The primary structure comprises 213 residues: GTP-binding protein YPTC4 (213 aa).

GTP is bound at residue 13–21; the sequence is GDTGVGKSC. Positions 35–43 match the Effector region motif; sequence HDLTIGVEF. GTP contacts are provided by residues 61-65, 119-122, and 149-151; these read DTAGQ, NKCD, and SAR. A disordered region spans residues 194-213; the sequence is AGPQTVKPGEGGAAKSSSCC. Residues cysteine 212 and cysteine 213 are each lipidated (S-geranylgeranyl cysteine).

Belongs to the small GTPase superfamily. Rab family.

The protein resides in the cell membrane. In terms of biological role, protein transport. Probably involved in vesicular traffic. The chain is GTP-binding protein YPTC4 (YPTC4) from Chlamydomonas reinhardtii (Chlamydomonas smithii).